The following is a 632-amino-acid chain: PTS system mannitol-specific EIICBA component (632 aa).

The PTS EIIC type-2 domain occupies 12 to 341; that stretch reads FGRFLSNMIM…ILLKYDFNTI (330 aa). The next 6 membrane-spanning stretches (helical) occupy residues 24–45, 50–70, 134–155, 165–185, 273–292, and 313–334; these read ISIF…WQPN, QLIS…TGGS, SLAI…PFIE, IQII…EPAK, LILG…GGLI, and FSNI…SILL. In terms of domain architecture, PTS EIIB type-2 spans 374–469; that stretch reads KTIIVACDAG…KLVENMVFLY (96 aa). Cysteine 380 serves as the catalytic Phosphocysteine intermediate; for EIIB activity. Cysteine 380 carries the phosphocysteine; by EIIA modification. One can recognise a PTS EIIA type-2 domain in the interval 488–630; it reads FQLNEENIIL…KEALSLLTME (143 aa). The Tele-phosphohistidine intermediate; for EIIA activity role is filled by histidine 548. Residue histidine 548 is modified to Phosphohistidine; by HPr.

As to quaternary structure, homodimer. In terms of processing, an intramolecular phosphotransfer takes places between His-548 and Cys-380.

The protein resides in the cell inner membrane. It carries out the reaction D-mannitol(out) + N(pros)-phospho-L-histidyl-[protein] = D-mannitol 1-phosphate(in) + L-histidyl-[protein]. Its function is as follows. The phosphoenolpyruvate-dependent sugar phosphotransferase system (sugar PTS), a major carbohydrate active transport system, catalyzes the phosphorylation of incoming sugar substrates concomitantly with their translocation across the cell membrane. This system is involved in D-mannitol transport. The chain is PTS system mannitol-specific EIICBA component (mtlA) from Buchnera aphidicola subsp. Acyrthosiphon pisum (strain APS) (Acyrthosiphon pisum symbiotic bacterium).